The chain runs to 503 residues: Probable DNA ligase (503 aa).

Residue Glu210 participates in ATP binding. The active-site N6-AMP-lysine intermediate is Lys212. ATP contacts are provided by Arg217, Arg232, Glu261, Phe296, Arg367, and Lys373.

Belongs to the ATP-dependent DNA ligase family. Mg(2+) serves as cofactor.

The enzyme catalyses ATP + (deoxyribonucleotide)n-3'-hydroxyl + 5'-phospho-(deoxyribonucleotide)m = (deoxyribonucleotide)n+m + AMP + diphosphate.. DNA ligase that seals nicks in double-stranded DNA during DNA replication, DNA recombination and DNA repair. The sequence is that of Probable DNA ligase from Rhodococcus opacus (strain B4).